The primary structure comprises 78 residues: WAP four-disulfide core domain protein 12 (78 aa).

A signal peptide spans 1 to 21 (MWPNSILVLTVLLISSTLVTG). A WAP domain is found at 25 to 72 (KGAEKGVCPPDNVRCIRGEDPQCHNDNDCKDQKICCYWHCGFKCVQPV). Disulfide bonds link Cys32-Cys60, Cys39-Cys64, Cys47-Cys59, and Cys53-Cys68.

It localises to the secreted. Functionally, antibacterial protein. Putative acid-stable proteinase inhibitor. The protein is WAP four-disulfide core domain protein 12 of Rattus norvegicus (Rat).